Reading from the N-terminus, the 616-residue chain is Heme A synthase-mitochondrial ferredoxin fusion protein (616 aa).

A mitochondrion-targeting transit peptide spans 1-45 (MNISRSSGLMRQFLLQPLRKGCDISCLGRSSWRMSRSFSGSSVLN). Residues 45–465 (NEINLSRTKN…AALSLAQRLH (421 aa)) form a heme a synthase cox15-like region. At 46 to 97 (EINLSRTKNLFLNDCKFNKNSFEKFFARRLSNSVAPTPGGILQETEKIPSKK) the chain is on the mitochondrial matrix side. Residues 98–118 (VAFWLLGSSALVLAIVVVGGI) form a helical membrane-spanning segment. Over 119 to 182 (TRLTESGLSI…NIFFWEWFHR (64 aa)) the chain is Mitochondrial intermembrane. His-181 contacts heme o. The chain crosses the membrane as a helical span at residues 183 to 203 (VLGRGIGLTILLPSIYMIVTK). At 204–212 (RASPWLSKR) the chain is on the mitochondrial matrix side. The chain crosses the membrane as a helical span at residues 213 to 233 (LIGLTGLVGLQGVIGWWMVKS). The Mitochondrial intermembrane portion of the chain corresponds to 234 to 254 (GLSEELFSDGSHPRVSHYRLA). A helical transmembrane segment spans residues 255-275 (THLAAAVALYIGLVWTGHGIL). Heme o is bound at residue His-256. The Mitochondrial matrix segment spans residues 276 to 311 (QRHAFLKSMKSGSTSQLTSMVSSVQKMKGFRTSVNS). The helical transmembrane segment at 312-332 (FVGLVLITLLSGAFVAGLDAG) threads the bilayer. The Mitochondrial intermembrane segment spans residues 333–380 (MIYCTFPEMGEGRLAPSKSELFDQRFCRKDDKSDLIWRNMIDNPSLVQ). A helical transmembrane segment spans residues 381-401 (LEHRILAITTFVAACGLFIFS). Residue His-383 participates in heme b binding. Over 402–417 (RAKRNILPKKIKTSIN) the chain is Mitochondrial matrix. A helical membrane pass occupies residues 418–438 (VVTGVVTAQATLGIMTLIYVV). Pro-439 is a topological domain (mitochondrial intermembrane). The chain crosses the membrane as a helical span at residues 440 to 460 (VPLAALHQAGSLVTLTAALSL). His-446 serves as a coordination point for heme b. The Mitochondrial matrix portion of the chain corresponds to 461–616 (AQRLHPEYAL…RNIRLERPKA (156 aa)). One can recognise a 2Fe-2S ferredoxin-type domain in the interval 502–606 (FRPSFHSEIK…GIRVRIPAQT (105 aa)). The tract at residues 516–616 (GTGIKVFFVT…RNIRLERPKA (101 aa)) is mitochondrial ferredoxin yah1-like. 4 residues coordinate [2Fe-2S] cluster: Cys-541, Cys-547, Cys-550, and Cys-587.

The protein in the N-terminal section; belongs to the COX15/CtaA family. Type 2 subfamily. This sequence in the C-terminal section; belongs to the adrenodoxin/putidaredoxin family. As to quaternary structure, homodimer. Heme b is required as a cofactor. Requires [2Fe-2S] cluster as cofactor. Post-translationally, the etp1 preprotein is cleaved into 2 chains after imort into mitochondria. The N-terminal chain containing a heme A synthase cox15-like domain etp1(cd) is a subunit of the membrane-embedded cytochrome c oxidase complex and functions in the respiratory chain. The C-terminal chain containing a ferredoxin yah1-like domain etp1(fd) is released and serves in the matrix as electron transfer protein.

The protein resides in the mitochondrion inner membrane. The protein localises to the mitochondrion matrix. The catalysed reaction is Fe(II)-heme o + 2 A + H2O = Fe(II)-heme a + 2 AH2. It functions in the pathway porphyrin-containing compound metabolism; heme A biosynthesis; heme A from heme O: step 1/1. Catalyzes the second reaction in the biosynthesis of heme A, a prosthetic group of mitochondrial cytochrome c oxidase (CcO). Heme A is synthesized from heme B by two sequential enzymatic reactions catalyzed by heme O synthase (HOS) and heme A synthase (HAS). HAS catalyzes the conversion of heme O to heme A by two successive hydroxylations of the methyl group at C8, in a reaction that involves matrix ferredoxin and ferredoxin reductase. The first hydroxylation forms heme I, the second hydroxylation results in an unstable dihydroxymethyl group, which spontaneously dehydrates, resulting in the formyl group of heme A. In terms of biological role, iron-sulfur protein that transfers electrons in a wide variety of metabolic reactions. Involved in heme A biosynthesis and in iron-sulfur cluster assembly. Transfers electrons from adrenodoxin reductase arh1 to heme A synthase etp1(cd), a heme protein that catalyzes the conversion of heme O to heme A. Required for the de novo synthesis of Fe-S clusters on iron sulfur cluster assembly protein isu1. Interact in its reduced state with isu1 to productively deliver electrons for Fe-S cluster synthesis. Essential for coenzyme Q biosynthesis. May transfer the electrons required for the hydroxylation reaction performed by coq6. The sequence is that of Heme A synthase-mitochondrial ferredoxin fusion protein from Schizosaccharomyces pombe (strain 972 / ATCC 24843) (Fission yeast).